The following is a 272-amino-acid chain: uncharacterized protein (272 aa).

This is an uncharacterized protein from Bacillus anthracis.